The sequence spans 296 residues: 4-hydroxy-tetrahydrodipicolinate synthase (296 aa).

Pyruvate is bound at residue Thr-49. The active-site Proton donor/acceptor is Tyr-137. The active-site Schiff-base intermediate with substrate is the Lys-165. Residue Ile-208 participates in pyruvate binding.

It belongs to the DapA family. As to quaternary structure, homotetramer; dimer of dimers.

It localises to the cytoplasm. It catalyses the reaction L-aspartate 4-semialdehyde + pyruvate = (2S,4S)-4-hydroxy-2,3,4,5-tetrahydrodipicolinate + H2O + H(+). It functions in the pathway amino-acid biosynthesis; L-lysine biosynthesis via DAP pathway; (S)-tetrahydrodipicolinate from L-aspartate: step 3/4. Functionally, catalyzes the condensation of (S)-aspartate-beta-semialdehyde [(S)-ASA] and pyruvate to 4-hydroxy-tetrahydrodipicolinate (HTPA). The protein is 4-hydroxy-tetrahydrodipicolinate synthase of Ehrlichia canis (strain Jake).